The following is a 337-amino-acid chain: Anthranilate phosphoribosyltransferase (337 aa).

5-phospho-alpha-D-ribose 1-diphosphate contacts are provided by residues Gly82, 85–86 (GD), Thr90, 92–95 (NIST), 110–118 (KHGGRSVSS), and Ser122. Gly82 is a binding site for anthranilate. Ser94 lines the Mg(2+) pocket. Arg168 provides a ligand contact to anthranilate. Residues Asp226 and Glu227 each contribute to the Mg(2+) site.

This sequence belongs to the anthranilate phosphoribosyltransferase family. In terms of assembly, homodimer. It depends on Mg(2+) as a cofactor.

The enzyme catalyses N-(5-phospho-beta-D-ribosyl)anthranilate + diphosphate = 5-phospho-alpha-D-ribose 1-diphosphate + anthranilate. It functions in the pathway amino-acid biosynthesis; L-tryptophan biosynthesis; L-tryptophan from chorismate: step 2/5. Its function is as follows. Catalyzes the transfer of the phosphoribosyl group of 5-phosphorylribose-1-pyrophosphate (PRPP) to anthranilate to yield N-(5'-phosphoribosyl)-anthranilate (PRA). The protein is Anthranilate phosphoribosyltransferase of Francisella tularensis subsp. holarctica (strain OSU18).